The primary structure comprises 383 residues: Large ribosomal subunit protein uL3 (383 aa).

Belongs to the universal ribosomal protein uL3 family.

It localises to the cytoplasm. The polypeptide is Large ribosomal subunit protein uL3 (RPL3-1) (Encephalitozoon cuniculi (strain GB-M1) (Microsporidian parasite)).